Here is a 335-residue protein sequence, read N- to C-terminus: MAARTRETGNTATVAETAVKQVQIDGMVVLKIIKHYQEEGHGSEVVQGVLLGLVVDDRLEITNCFPFPQHTEDDVDFDEVQYQMEMMRSLRHVNIDHLHVGWYQSTFYGTFVSRALLDSQFSYQHAIEESVVLIYDPIKTGQGSLSLKAYRLTPKLMEVCKEKDFSAEGLKKANIAFEDMFEEVPIIIKNSHLINVLAWELDKKAPVTEKHELLNLSSSNHLEKSLQLLMDRVDELSQDIVKYNTYLRNISKQQQQKHQYTQRRQQENLQRQSRGETSLPEEDVNKLFKPPVPPSRMDSLLIAGQINTYIQHIKEFTSQNLGKLFMAEAMQDPTI.

An MPN domain is found at 22 to 156 (VQIDGMVVLK…LKAYRLTPKL (135 aa)). A compositionally biased stretch (low complexity) spans 254-263 (QQQKHQYTQR). The interval 254–287 (QQQKHQYTQRRQQENLQRQSRGETSLPEEDVNKL) is disordered. Positions 267–276 (ENLQRQSRGE) are enriched in polar residues.

Belongs to the eIF-3 subunit H family. As to quaternary structure, component of the eukaryotic translation initiation factor 3 (eIF-3) complex, which is composed of 13 subunits: eif3a, eif3b, eif3c, eif3d, eif3e, eif3f, eif3g, eif3h, eif3i, eif3j, eif3k, eif3l and eif3m.

The protein localises to the cytoplasm. In terms of biological role, component of the eukaryotic translation initiation factor 3 (eIF-3) complex, which is involved in protein synthesis of a specialized repertoire of mRNAs and, together with other initiation factors, stimulates binding of mRNA and methionyl-tRNAi to the 40S ribosome. The eIF-3 complex specifically targets and initiates translation of a subset of mRNAs involved in cell proliferation. In Xenopus tropicalis (Western clawed frog), this protein is Eukaryotic translation initiation factor 3 subunit H (eif3h).